A 259-amino-acid chain; its full sequence is MLFLLSPAKSLDYDTPLPPGLAHTLPPFIHESTQLIEVLREKSPQELASLMGISDALAGLNAARYAAWSPRFTAANARQALFAFNGDVYEGLDARSLDGDGLRWAQDHVAILSGLYGVLRPLDRMQPYRLEMGTRLATGAGANLYRFWGKRIAEHLNQRLAADATPVVVNLASQEYFKSVDTAALKARVIECVFEDWKGGRYKIISFHAKRARGLMARYAIQHRVVAPRQLEGFDLEGYAFDASASAQDRLVFRRKDAG.

This sequence belongs to the UPF0246 family.

The polypeptide is UPF0246 protein Aave_1172 (Paracidovorax citrulli (strain AAC00-1) (Acidovorax citrulli)).